The following is a 600-amino-acid chain: Transcription factor rlmA (600 aa).

Positions M1–D61 constitute an MADS-box domain. 2 disordered regions span residues Y71–T518 and G544–T600. A compositionally biased stretch (basic and acidic residues) spans P75–D89. Positions P151–S160 are enriched in polar residues. Residues Q222–H242 are compositionally biased toward pro residues. Residues Q243–P260 show a composition bias toward low complexity. A compositionally biased stretch (polar residues) spans H328–I339. The segment covering P364–K384 has biased composition (basic and acidic residues). The span at P386 to R397 shows a compositional bias: pro residues. Residues R440–G452 show a composition bias toward low complexity. The span at N453 to S468 shows a compositional bias: polar residues. A compositionally biased stretch (pro residues) spans P490 to G501. The segment covering A503–N515 has biased composition (low complexity).

The protein belongs to the MEF2 family. As to quaternary structure, interacts with hsp90. In terms of processing, phosphorylation during asexual development.

Its subcellular location is the nucleus. Transcription factor; part of cell wall integrity (CWI) signaling pathway composed of pkcA, the bck1-mkk2-mpka MAPK cascade and the downstream rlmA transcription regulator. The CWI signaling pathway regulates cell wall integrity and pyomelanin formation. CWI also controls oxidative stress response, gliotoxin production, iron adaptation and asexual development. Finally, CWI is constitutively required for A.fumigatus to cope with the temperature increase found in the mammalian lung environment, during infection. Positively regulates the phosphorylation of mpkA. Involved in tolerance to oxidative damage and transcriptional regulation of genes related to oxidative stress adaptation. Directly regulates the expression of regulators of conidiation, including flbB, flbC, brlA, abaA, and rasB, as well as genes involved in cell wall synthesis and remodeling. Specifically associates with the target fumiquinazoline (fmq) cluster genes promoters at conserved motifs (5'-TAWWWWTA-3') during conidiation to supplement mature conidia with fumiquinazoline C. Also controls the DHN-melanin production via binding the promoter of pksP. The protein is Transcription factor rlmA of Aspergillus fumigatus (strain ATCC MYA-4609 / CBS 101355 / FGSC A1100 / Af293) (Neosartorya fumigata).